We begin with the raw amino-acid sequence, 279 residues long: Homeobox protein BarH-like 2 (279 aa).

Disordered stretches follow at residues 110–137 (APGGEALASSESETEQPTPRQKKPRRSR) and 194–279 (KGGQ…PPLS). The span at 118 to 128 (SSESETEQPTP) shows a compositional bias: polar residues. The segment at residues 133-192 (PRRSRTIFTELQLMGLEKKFQKQKYLSTPDRLDLAQSLGLTQLQVKTWYQNRRMKWKKMV) is a DNA-binding region (homeobox). Residues 225 to 240 (NSQAQGQEQLEPSQGQ) show a composition bias toward polar residues. Positions 261–279 (PPDPPQELPIPSSEPPPLS) are enriched in pro residues.

It belongs to the BAR homeobox family. In terms of tissue distribution, highly expressed in adult salivary gland and at much lower levels in mammary gland, kidney and placenta.

The protein resides in the nucleus. In terms of biological role, transcription factor. Binds optimally to the DNA consensus sequence 5'-YYTAATGRTTTTY-3'. May control the expression of neural adhesion molecules such as L1 or Ng-CAM during embryonic development of both the central and peripherical nervous system. May be involved in controlling adhesive processes in keratinizing epithelia. This is Homeobox protein BarH-like 2 (BARX2) from Homo sapiens (Human).